We begin with the raw amino-acid sequence, 214 residues long: uncharacterized protein (214 aa).

The next 4 membrane-spanning stretches (helical) occupy residues 10-30, 55-75, 147-167, and 174-194; these read IPPL…SLGI, IGVG…GYAI, VSGA…AGMA, and RFSW…AILL.

The protein belongs to the DedA family.

It is found in the cell membrane. This is an uncharacterized protein from Mycobacterium leprae (strain TN).